The chain runs to 213 residues: Imidazole glycerol phosphate synthase subunit HisH 1 (213 aa).

In terms of domain architecture, Glutamine amidotransferase type-1 spans 3 to 213; that stretch reads SVSILDYGVG…LSIIQQFLQI (211 aa). Cysteine 81 serves as the catalytic Nucleophile. Residues histidine 195 and glutamate 197 contribute to the active site.

Heterodimer of HisH and HisF.

It is found in the cytoplasm. The enzyme catalyses 5-[(5-phospho-1-deoxy-D-ribulos-1-ylimino)methylamino]-1-(5-phospho-beta-D-ribosyl)imidazole-4-carboxamide + L-glutamine = D-erythro-1-(imidazol-4-yl)glycerol 3-phosphate + 5-amino-1-(5-phospho-beta-D-ribosyl)imidazole-4-carboxamide + L-glutamate + H(+). It carries out the reaction L-glutamine + H2O = L-glutamate + NH4(+). It participates in amino-acid biosynthesis; L-histidine biosynthesis; L-histidine from 5-phospho-alpha-D-ribose 1-diphosphate: step 5/9. Functionally, IGPS catalyzes the conversion of PRFAR and glutamine to IGP, AICAR and glutamate. The HisH subunit provides the glutamine amidotransferase activity that produces the ammonia necessary to HisF for the synthesis of IGP and AICAR. The sequence is that of Imidazole glycerol phosphate synthase subunit HisH 1 from Legionella pneumophila (strain Lens).